Reading from the N-terminus, the 1065-residue chain is MSVSTVGGDVRVTRWVATIAGLIGFVLSVATPLLPVVQTTATLNWPQGGQLNSVTAPLISLTPVDLTATVPCSLVRDLPPGGGVILSTGPKKGKDAALNALFVVAHGKRVDVTDRNVVIASASRDQVAGAGCSRIEIASTRAGTFATFVGLTDPAGKPLGGGFPDPNLRPQIVGVFTDLTGPAPAGLKLSATIDTRFSTTPTTLKLAAMVTAILATIVALVALWRLDQLDGHRMRRLIPANWRTFTLADVAVIFGFVLWHVIGANSSDDGYILGMARVADRAGYMSNYFRWFGSPEDPFGWYYNLLALMTHVSDASLWMRLPDLFAGIVCWLLLSREVLPRLGPAVAASRPANWAAGMVLLTAWMPFDNGLRPEPIIALGSLVTYVLIERSMRYSRLTPAALAVITAAFTLGVQPTGLIAVAALVAGGRPILRILVRRHRVVGTWPLVAPMLAAGTVILTVVFADQTLATVLEATRIRTAIGPSQAWYTENLRYYYLILPTVDGSLSRRFGFLITALCLFTAVFIMLRRKRIPGVARGPAWRLMGVIFGTMFFLMFTPTKWVHHFGLFAAVGAAMAALTTVLVSPAVLGWSRNRMAFLAALLFMMALCFATTNGWWYVSSYGVPFNSTMPKIGGITVSTVFFSMFVAAALYAIWLHFASREHGEGRLARALTAAPVPLAAGFMALVFIASMVAGIVRQYPTYSNAWDNLREFSGGCGLADDVLVEPDSNVGYMTPLGGDYGPLGPLGGQHPVGFSPNGVPEHTVAEAIRITPNQPGTDYDWDAPTKLSAPGINGSTVPLPYGLDAARVPLAGSYTTGAQQQSRLTSAWYRLPAPDDGHPLVVVTAAGKIAGNSVLHHHTDGQTVVLEYGRPGPGGDIVPAGRLVPYDLYGEQPKAWRNLRFARSDMPADTVAVRVVAEDLSLTPEDWIAVTPPRVPEMRSLQEYVGSTQPVLMDWAVGLAFPCQQPMLHVNGVTEIPKFRITPDYTAKKMDTDTWEDGTNGGLLGITDLLLRAHVMSTYLSHDWGRDWGSLRRFETIADAHPAQLDLGTATRTGWWSPGPIRIKP.

The next 12 membrane-spanning stretches (helical) occupy residues 15 to 37 (WVAT…LPVV), 204 to 226 (LKLA…LWRL), 241 to 263 (NWRT…HVIG), 394 to 413 (YSRL…TLGV), 417 to 436 (GLIA…RILV), 441 to 463 (VVGT…TVVF), 510 to 527 (FGFL…FIML), 540 to 557 (AWRL…LMFT), 567 to 589 (LFAA…AVLG), 596 to 618 (AFLA…WWYV), 633 to 655 (GGIT…AIWL), and 667 to 689 (LARA…VFIA).

It belongs to the emb family.

It is found in the cell membrane. In terms of biological role, arabinosyl transferase responsible for the polymerization of arabinose into the arabinan of arabinogalactan. The sequence is that of Probable arabinosyltransferase B (embB) from Mycobacterium avium.